A 379-amino-acid chain; its full sequence is NADH-quinone oxidoreductase subunit D 2 (379 aa).

Belongs to the complex I 49 kDa subunit family. NDH-1 is composed of 14 different subunits. Subunits NuoB, C, D, E, F, and G constitute the peripheral sector of the complex.

The protein resides in the cell inner membrane. The enzyme catalyses a quinone + NADH + 5 H(+)(in) = a quinol + NAD(+) + 4 H(+)(out). In terms of biological role, NDH-1 shuttles electrons from NADH, via FMN and iron-sulfur (Fe-S) centers, to quinones in the respiratory chain. The immediate electron acceptor for the enzyme in this species is believed to be ubiquinone. Couples the redox reaction to proton translocation (for every two electrons transferred, four hydrogen ions are translocated across the cytoplasmic membrane), and thus conserves the redox energy in a proton gradient. The sequence is that of NADH-quinone oxidoreductase subunit D 2 from Anaeromyxobacter dehalogenans (strain 2CP-C).